We begin with the raw amino-acid sequence, 495 residues long: Acetyl-coenzyme A carboxylase carboxyl transferase subunit beta, chloroplastic (495 aa).

The tract at residues 188–208 is disordered; it reads SRNSSENEGSSRRTRTKGSDL. Residues 226–495 enclose the CoA carboxyltransferase N-terminal domain; sequence LWVQCENCYG…PLNQKSSKIK (270 aa). C230, C233, C249, and C252 together coordinate Zn(2+). A C4-type zinc finger spans residues 230–252; the sequence is CENCYGLNYKKFFKSKMNICEQC.

This sequence belongs to the AccD/PCCB family. In terms of assembly, acetyl-CoA carboxylase is a heterohexamer composed of biotin carboxyl carrier protein, biotin carboxylase and 2 subunits each of ACCase subunit alpha and ACCase plastid-coded subunit beta (accD). Zn(2+) serves as cofactor.

It localises to the plastid. The protein localises to the chloroplast stroma. The enzyme catalyses N(6)-carboxybiotinyl-L-lysyl-[protein] + acetyl-CoA = N(6)-biotinyl-L-lysyl-[protein] + malonyl-CoA. Its pathway is lipid metabolism; malonyl-CoA biosynthesis; malonyl-CoA from acetyl-CoA: step 1/1. In terms of biological role, component of the acetyl coenzyme A carboxylase (ACC) complex. Biotin carboxylase (BC) catalyzes the carboxylation of biotin on its carrier protein (BCCP) and then the CO(2) group is transferred by the transcarboxylase to acetyl-CoA to form malonyl-CoA. The polypeptide is Acetyl-coenzyme A carboxylase carboxyl transferase subunit beta, chloroplastic (Nicotiana tomentosiformis (Tobacco)).